The primary structure comprises 118 residues: UPF0148 protein LS215_1455 (118 aa).

Belongs to the UPF0148 family.

The polypeptide is UPF0148 protein LS215_1455 (Saccharolobus islandicus (strain L.S.2.15 / Lassen #1) (Sulfolobus islandicus)).